We begin with the raw amino-acid sequence, 905 residues long: A disintegrin and metalloproteinase with thrombospondin motifs 8 (905 aa).

The signal sequence occupies residues 1 to 28 (MLRDPTTTGWPPLLLLLLQLPPPPLVCG). The propeptide occupies 29 to 228 (APAGPGTGAQ…PFGSKTRSKR (200 aa)). Disordered regions lie at residues 139–163 (PQGA…RRED) and 186–225 (NGQG…SKTR). Over residues 191–215 (ERSDNEEDRKQDKEGLLKETEDSRK) the composition is skewed to basic and acidic residues. Residues 234–444 (RFVETLLVAD…GHGDCLLDAP (211 aa)) form the Peptidase M12B domain. 10 cysteine pairs are disulfide-bonded: cysteine 309-cysteine 362, cysteine 338-cysteine 344, cysteine 356-cysteine 439, cysteine 394-cysteine 423, cysteine 478-cysteine 502, cysteine 487-cysteine 523, cysteine 517-cysteine 528, cysteine 554-cysteine 591, cysteine 558-cysteine 596, and cysteine 569-cysteine 581. Histidine 378 is a binding site for Zn(2+). The active site involves glutamate 379. Zn(2+) contacts are provided by histidine 382 and histidine 388. 3 N-linked (GlcNAc...) asparagine glycosylation sites follow: asparagine 415, asparagine 480, and asparagine 506. The Disintegrin domain occupies 453–541 (GLPGHSTLYE…EDVENPKAVV (89 aa)). Positions 542-597 (DGDWGPWRPWGQCSRTCGGGIQFSNRECDNPMPQNGGRFCLGERVKYQSCNTEECP) constitute a TSP type-1 1 domain. N-linked (GlcNAc...) asparagine glycosylation is present at asparagine 615. Residues 706–847 (RKISGSFTPF…RATTNIIQSL (142 aa)) are spacer. One can recognise a TSP type-1 2 domain in the interval 848–904 (PSAEWVLGDWSECPSTCRGSWQRRTVECRDPSGQASDTCDEALKPEDAKPCGSQPCP). A disordered region spans residues 877-905 (DPSGQASDTCDEALKPEDAKPCGSQPCPL).

Requires Zn(2+) as cofactor. In terms of processing, the precursor is cleaved by a furin endopeptidase. Glycosylated. Can be O-fucosylated by POFUT2 on a serine or a threonine residue found within the consensus sequence C1-X(2)-(S/T)-C2-G of the TSP type-1 repeat domains where C1 and C2 are the first and second cysteine residue of the repeat, respectively. Fucosylated repeats can then be further glycosylated by the addition of a beta-1,3-glucose residue by the glucosyltransferase, B3GALTL. Fucosylation mediates the efficient secretion of ADAMTS family members. Can also be C-glycosylated with one or two mannose molecules on tryptophan residues within the consensus sequence W-X-X-W of the TPRs, and N-glycosylated. These other glycosylations can also facilitate secretion. As to expression, expressed specifically in adult lung and heart and low expression during mouse development.

The protein resides in the secreted. The protein localises to the extracellular space. It is found in the extracellular matrix. Has anti-angiogenic properties. The polypeptide is A disintegrin and metalloproteinase with thrombospondin motifs 8 (Adamts8) (Mus musculus (Mouse)).